We begin with the raw amino-acid sequence, 581 residues long: uncharacterized protein (581 aa).

This is an uncharacterized protein from Acanthamoeba polyphaga mimivirus (APMV).